Here is a 489-residue protein sequence, read N- to C-terminus: Type II restriction enzyme Sau3AI (489 aa).

The cofactor is Mg(2+).

The enzyme catalyses Endonucleolytic cleavage of DNA to give specific double-stranded fragments with terminal 5'-phosphates.. An E and P subtype restriction enzyme that recognizes the double-stranded sequence 5'-GATC-3' and cleaves before G-1. The sequence is that of Type II restriction enzyme Sau3AI (sau3AIR) from Staphylococcus aureus.